Here is a 485-residue protein sequence, read N- to C-terminus: Benzaldehyde dehydrogenase YfmT (485 aa).

231–236 contacts NAD(+); the sequence is GSTKVG. Catalysis depends on residues Glu-253 and Cys-287.

It belongs to the aldehyde dehydrogenase family.

The catalysed reaction is benzaldehyde + NAD(+) + H2O = benzoate + NADH + 2 H(+). The enzyme catalyses vanillin + NAD(+) + H2O = vanillate + NADH + 2 H(+). Its function is as follows. A benzaldehyde dehydrogenase able to act on substrates with 3- and 4-hydroxy and methoxy substitutions; converts vanillin (4-hydroxy-3-methoxybenzaldehyde) to vanillic acid in vitro. The physiological substrate is unknown. This chain is Benzaldehyde dehydrogenase YfmT (yfmT), found in Bacillus subtilis (strain 168).